Reading from the N-terminus, the 157-residue chain is 2-C-methyl-D-erythritol 2,4-cyclodiphosphate synthase (157 aa).

A divalent metal cation is bound by residues aspartate 8 and histidine 10. Residues 8–10 (DVH) and 34–35 (HS) each bind 4-CDP-2-C-methyl-D-erythritol 2-phosphate. Residue histidine 42 coordinates a divalent metal cation. 4-CDP-2-C-methyl-D-erythritol 2-phosphate contacts are provided by residues 56–58 (DIG), 132–135 (TTNE), and arginine 142.

It belongs to the IspF family. In terms of assembly, homotrimer. A divalent metal cation is required as a cofactor.

The enzyme catalyses 4-CDP-2-C-methyl-D-erythritol 2-phosphate = 2-C-methyl-D-erythritol 2,4-cyclic diphosphate + CMP. It functions in the pathway isoprenoid biosynthesis; isopentenyl diphosphate biosynthesis via DXP pathway; isopentenyl diphosphate from 1-deoxy-D-xylulose 5-phosphate: step 4/6. In terms of biological role, involved in the biosynthesis of isopentenyl diphosphate (IPP) and dimethylallyl diphosphate (DMAPP), two major building blocks of isoprenoid compounds. Catalyzes the conversion of 4-diphosphocytidyl-2-C-methyl-D-erythritol 2-phosphate (CDP-ME2P) to 2-C-methyl-D-erythritol 2,4-cyclodiphosphate (ME-CPP) with a corresponding release of cytidine 5-monophosphate (CMP). The sequence is that of 2-C-methyl-D-erythritol 2,4-cyclodiphosphate synthase from Chlorobaculum parvum (strain DSM 263 / NCIMB 8327) (Chlorobium vibrioforme subsp. thiosulfatophilum).